The sequence spans 489 residues: N-succinylglutamate 5-semialdehyde dehydrogenase (489 aa).

NAD(+) is bound at residue 223 to 228; that stretch reads GSSRTG. Residues Glu246 and Cys280 contribute to the active site.

It belongs to the aldehyde dehydrogenase family. AstD subfamily.

It carries out the reaction N-succinyl-L-glutamate 5-semialdehyde + NAD(+) + H2O = N-succinyl-L-glutamate + NADH + 2 H(+). It participates in amino-acid degradation; L-arginine degradation via AST pathway; L-glutamate and succinate from L-arginine: step 4/5. Catalyzes the NAD-dependent reduction of succinylglutamate semialdehyde into succinylglutamate. This Aeromonas hydrophila subsp. hydrophila (strain ATCC 7966 / DSM 30187 / BCRC 13018 / CCUG 14551 / JCM 1027 / KCTC 2358 / NCIMB 9240 / NCTC 8049) protein is N-succinylglutamate 5-semialdehyde dehydrogenase.